A 305-amino-acid polypeptide reads, in one-letter code: Homoserine O-acetyltransferase (305 aa).

The active-site Acyl-thioester intermediate is cysteine 142. Lysine 163 and serine 192 together coordinate substrate. Histidine 235 (proton acceptor) is an active-site residue. Glutamate 237 is an active-site residue. Arginine 249 contacts substrate.

It belongs to the MetA family.

It localises to the cytoplasm. It catalyses the reaction L-homoserine + acetyl-CoA = O-acetyl-L-homoserine + CoA. It functions in the pathway amino-acid biosynthesis; L-methionine biosynthesis via de novo pathway; O-acetyl-L-homoserine from L-homoserine: step 1/1. Functionally, transfers an acetyl group from acetyl-CoA to L-homoserine, forming acetyl-L-homoserine. This chain is Homoserine O-acetyltransferase, found in Phocaeicola vulgatus (strain ATCC 8482 / DSM 1447 / JCM 5826 / CCUG 4940 / NBRC 14291 / NCTC 11154) (Bacteroides vulgatus).